We begin with the raw amino-acid sequence, 368 residues long: MSSLRRRIETVMRSGPDENMGLTGAVLRLVSLVYGLVMRLRYKLYQKGFFKTGKAPCMVVSVGNITVGGTGKTPMAIYLARLFNDWGLNVAIASRGYGGTMQKQGGAASDGKDILLTPAEAGDEPWLMAVKLPGVPVVVGGDRVKSANLCASQFGTRILILDDAFSRLAIDRDLNLLLVDSQAPFGNGHVFPRGLLREPAEFASRADAVIRTRADRGAGQAALPQGKPVFSCTHKPKGFLEYFPQKGTSGPKIVRHSLDDLKGKKVAAFAGIADNQGFFDGLSSLGVAVLDRLSFPDHHAYTLRDRNIIVETAIKADVKALITTEKDLVRLTGWDAHGLDLYALEIALEFEQAQKFEDFLKSKLQIGE.

66–73 (TVGGTGKT) is a binding site for ATP.

It belongs to the LpxK family.

The enzyme catalyses a lipid A disaccharide + ATP = a lipid IVA + ADP + H(+). It functions in the pathway glycolipid biosynthesis; lipid IV(A) biosynthesis; lipid IV(A) from (3R)-3-hydroxytetradecanoyl-[acyl-carrier-protein] and UDP-N-acetyl-alpha-D-glucosamine: step 6/6. In terms of biological role, transfers the gamma-phosphate of ATP to the 4'-position of a tetraacyldisaccharide 1-phosphate intermediate (termed DS-1-P) to form tetraacyldisaccharide 1,4'-bis-phosphate (lipid IVA). This is Tetraacyldisaccharide 4'-kinase from Desulfatibacillum aliphaticivorans.